The sequence spans 101 residues: NADH-quinone oxidoreductase subunit K (101 aa).

The next 3 membrane-spanning stretches (helical) occupy residues 4–24 (LAHF…GIFL), 30–50 (IVLL…FVAF), and 61–81 (VFVF…LAIL).

The protein belongs to the complex I subunit 4L family. As to quaternary structure, NDH-1 is composed of 14 different subunits. Subunits NuoA, H, J, K, L, M, N constitute the membrane sector of the complex.

Its subcellular location is the cell inner membrane. It catalyses the reaction a quinone + NADH + 5 H(+)(in) = a quinol + NAD(+) + 4 H(+)(out). In terms of biological role, NDH-1 shuttles electrons from NADH, via FMN and iron-sulfur (Fe-S) centers, to quinones in the respiratory chain. The immediate electron acceptor for the enzyme in this species is believed to be ubiquinone. Couples the redox reaction to proton translocation (for every two electrons transferred, four hydrogen ions are translocated across the cytoplasmic membrane), and thus conserves the redox energy in a proton gradient. The protein is NADH-quinone oxidoreductase subunit K of Cupriavidus pinatubonensis (strain JMP 134 / LMG 1197) (Cupriavidus necator (strain JMP 134)).